We begin with the raw amino-acid sequence, 151 residues long: UPF0102 protein Ava_4800 (151 aa).

The protein belongs to the UPF0102 family.

The protein is UPF0102 protein Ava_4800 of Trichormus variabilis (strain ATCC 29413 / PCC 7937) (Anabaena variabilis).